Reading from the N-terminus, the 198-residue chain is Inositol diphosphatase DSP4 (198 aa).

The tract at residues 1-23 is disordered; sequence MTLESYAGDVHTVPQSENSMEER. The 155-residue stretch at 34-188 folds into the Tyrosine-protein phosphatase domain; the sequence is NFAMVDNGIF…LKHTPLSFSC (155 aa). The segment at 90-102 is WPD loop important for active site topology; the sequence is FGIERCKEPFVNI. The 1D-myo-inositol hexakisphosphate site is built by asparagine 101 and isoleucine 102. Cysteine 126 (phosphocysteine intermediate) is an active-site residue.

Belongs to the protein-tyrosine phosphatase family. Atypical dual-specificity phosphatase Siw14-like subfamily. Highly expressed in flowers and at lower levels in roots, leaves, stems and siliques.

The catalysed reaction is 5-diphospho-1D-myo-inositol 1,2,3,4,6-pentakisphosphate + H2O = 1D-myo-inositol hexakisphosphate + phosphate + H(+). The enzyme catalyses 1,5-bis(diphospho)-1D-myo-inositol 2,3,4,6-tetrakisphosphate + H2O = 1-diphospho-1D-myo-inositol 2,3,4,5,6-pentakisphosphate + phosphate + 2 H(+). It carries out the reaction 3,5-bis(diphospho)-1D-myo-inositol 1,2,4,6-tetrakisphosphate + H2O = 3-diphospho-1D-myo-inositol 1,2,4,5,6-pentakisphosphate + phosphate + 2 H(+). It catalyses the reaction 6-diphospho-1D-myo-inositol pentakisphosphate + H2O = 1D-myo-inositol hexakisphosphate + phosphate + H(+). Functionally, cleaves the beta-phosphate at the 5-position of soluble inositol pyrophosphates. Has highest activity on 5-diphosphoinositol 1,2,3,4,6-pentakisphosphate (5-InsP(7)), 1,5-bis-diphosphoinositol 2,3,4,6-tetrakisphosphate (1,5-InsP(8)) and 3,5-InsP(8). Acts as a negative regulator of defense responses against the bacterial pathogen Pseudomonas syringae pv tomato strain DC3000. The sequence is that of Inositol diphosphatase DSP4 from Arabidopsis thaliana (Mouse-ear cress).